Reading from the N-terminus, the 301-residue chain is Pseudouridine-5'-phosphate glycosidase (301 aa).

Catalysis depends on Glu23, which acts as the Proton donor. Lys84 and Val104 together coordinate substrate. A Mn(2+)-binding site is contributed by Asp136. 138–140 (SRD) is a substrate binding site. Residue Lys157 is the Nucleophile of the active site.

This sequence belongs to the pseudouridine-5'-phosphate glycosidase family. As to quaternary structure, homotrimer. Requires Mn(2+) as cofactor.

The enzyme catalyses D-ribose 5-phosphate + uracil = psi-UMP + H2O. Catalyzes the reversible cleavage of pseudouridine 5'-phosphate (PsiMP) to ribose 5-phosphate and uracil. Functions biologically in the cleavage direction, as part of a pseudouridine degradation pathway. This is Pseudouridine-5'-phosphate glycosidase from Mycoplasmopsis agalactiae (strain NCTC 10123 / CIP 59.7 / PG2) (Mycoplasma agalactiae).